Here is a 348-residue protein sequence, read N- to C-terminus: D-alanine--D-alanine ligase (348 aa).

The ATP-grasp domain maps to Lys136–Glu344. ATP is bound at residue Asn171 to Glu226. 3 residues coordinate Mg(2+): Asp297, Glu311, and Asn313.

This sequence belongs to the D-alanine--D-alanine ligase family. Mg(2+) serves as cofactor. It depends on Mn(2+) as a cofactor.

It is found in the cytoplasm. The catalysed reaction is 2 D-alanine + ATP = D-alanyl-D-alanine + ADP + phosphate + H(+). It participates in cell wall biogenesis; peptidoglycan biosynthesis. Its function is as follows. Cell wall formation. This Prochlorococcus marinus (strain NATL1A) protein is D-alanine--D-alanine ligase.